Consider the following 167-residue polypeptide: Sperm acrosome membrane-associated protein 3 (167 aa).

Residues 1 to 63 are Cytoplasmic-facing; that stretch reads MVSALREAPL…EARSRALRRR (63 aa). Residues 64–84 traverse the membrane as a helical; Signal-anchor for type II membrane protein segment; that stretch reads WCPAGIILLALISLLSCLLPA. The Extracellular portion of the chain corresponds to 85–167; the sequence is SEAKVYGRCE…VPNVCQMYCS (83 aa). One can recognise a C-type lysozyme domain in the interval 88-167; sequence KVYGRCELAR…VPNVCQMYCS (80 aa). Cys-151 and Cys-166 are joined by a disulfide.

Belongs to the glycosyl hydrolase 22 family. As to quaternary structure, interacts with ASTL. In terms of processing, the processed form derives from the membrane form by proteolytic processing.

The protein resides in the cytoplasmic vesicle. It localises to the secretory vesicle. The protein localises to the acrosome membrane. Sperm surface membrane protein that may be involved in sperm-egg plasma membrane adhesion and fusion during fertilization. It could be a potential receptor for the egg oligosaccharide residue N-acetylglucosamine, which is present in the extracellular matrix over the egg plasma membrane. The processed form has no detectable bacteriolytic activity in vitro. The sequence is that of Sperm acrosome membrane-associated protein 3 (SPACA3) from Pongo pygmaeus (Bornean orangutan).